The primary structure comprises 257 residues: Imidazole glycerol phosphate synthase subunit HisF (257 aa).

Residues aspartate 12 and aspartate 131 contribute to the active site.

Belongs to the HisA/HisF family. As to quaternary structure, heterodimer of HisH and HisF.

It localises to the cytoplasm. The enzyme catalyses 5-[(5-phospho-1-deoxy-D-ribulos-1-ylimino)methylamino]-1-(5-phospho-beta-D-ribosyl)imidazole-4-carboxamide + L-glutamine = D-erythro-1-(imidazol-4-yl)glycerol 3-phosphate + 5-amino-1-(5-phospho-beta-D-ribosyl)imidazole-4-carboxamide + L-glutamate + H(+). It functions in the pathway amino-acid biosynthesis; L-histidine biosynthesis; L-histidine from 5-phospho-alpha-D-ribose 1-diphosphate: step 5/9. IGPS catalyzes the conversion of PRFAR and glutamine to IGP, AICAR and glutamate. The HisF subunit catalyzes the cyclization activity that produces IGP and AICAR from PRFAR using the ammonia provided by the HisH subunit. The polypeptide is Imidazole glycerol phosphate synthase subunit HisF (Teredinibacter turnerae (strain ATCC 39867 / T7901)).